Consider the following 29-residue polypeptide: ShK homolog Ask132958 (29 aa).

Residues 1 to 29 form the ShKT domain; it reads CENTISGCSRADCLLTHRKQGCQKTCGLC. 3 cysteine pairs are disulfide-bonded: cysteine 1–cysteine 29, cysteine 8–cysteine 22, and cysteine 13–cysteine 26.

It belongs to the sea anemone type 1 potassium channel toxin family. Type 1a subfamily.

The protein resides in the secreted. It is found in the nematocyst. This peptide is similar to the potassium channel toxin ShK, but does not show activity on potassium channels. It appears that Lys-19, which is expected to occupy the pore of the channel, is not sufficiently accessible for binding, and therefore that this peptide must have a distinct functional role that does not involve potassium channels. It is noteworthy that this peptide is much more stable in the presence of trypsin, chymotrypsin and pepsin than the toxin ShK. This is ShK homolog Ask132958 from Anemonia sulcata (Mediterranean snakelocks sea anemone).